Here is a 217-residue protein sequence, read N- to C-terminus: MTETFDCADPEQRSRGIVSAVGAIKAGQLVVMPTDTVYGIGADAFDSSAVAALLSAKGRGRDMPVGVLVGSWHTIEGLVYSMPDGARELIRAFWPGALSLVVVQAPSLQWDLGDAHGTVMLRMPLHPVAIELLREVGPMAVSSANISGHPPPVDAEQARSQLGDHVAVYLDAGPSEQQAGSTIVDLTGATPRVLRPGPVSTERIAEVLGVDAASLFG.

The YrdC-like domain occupies 14–199 (SRGIVSAVGA…TPRVLRPGPV (186 aa)).

Belongs to the SUA5 family.

Its subcellular location is the cytoplasm. It catalyses the reaction L-threonine + hydrogencarbonate + ATP = L-threonylcarbamoyladenylate + diphosphate + H2O. Required for the formation of a threonylcarbamoyl group on adenosine at position 37 (t(6)A37) in tRNAs that read codons beginning with adenine. Catalyzes the conversion of L-threonine, HCO(3)(-)/CO(2) and ATP to give threonylcarbamoyl-AMP (TC-AMP) as the acyladenylate intermediate, with the release of diphosphate. This Mycobacterium tuberculosis (strain CDC 1551 / Oshkosh) protein is Putative threonylcarbamoyl-AMP synthase.